A 470-amino-acid polypeptide reads, in one-letter code: uncharacterized protein (470 aa).

A coiled-coil region spans residues 418 to 453 (SECCEEQEEKEKKKEKEKEKKKEKDDDDDQQNNNNN). A disordered region spans residues 423–470 (EQEEKEKKKEKEKEKKKEKDDDDDQQNNNNNDQNGLGLGLGLNFGLNL). The span at 426–441 (EKEKKKEKEKEKKKEK) shows a compositional bias: basic and acidic residues. Residues 448–457 (QNNNNNDQNG) are compositionally biased toward low complexity.

This is an uncharacterized protein from Acidianus bottle-shaped virus (isolate Italy/Pozzuoli) (ABV).